The chain runs to 792 residues: Probable exo-1,4-beta-xylosidase xlnD (792 aa).

The first 20 residues, 1–20, serve as a signal peptide directing secretion; sequence MSVAKSIAAVLVALLPGALA. N-linked (GlcNAc...) asparagine glycosylation is found at N23, N87, N118, N142, and N246. The active site involves D310. Residues N326, N385, N404, N440, N477, N518, N679, and N701 are each glycosylated (N-linked (GlcNAc...) asparagine).

The protein belongs to the glycosyl hydrolase 3 family.

The protein resides in the secreted. It carries out the reaction Hydrolysis of (1-&gt;4)-beta-D-xylans, to remove successive D-xylose residues from the non-reducing termini.. It participates in glycan degradation; xylan degradation. Functionally, xylan 1,4-beta-xylosidase involved in the hydrolysis of xylan, a major structural heterogeneous polysaccharide found in plant biomass representing the second most abundant polysaccharide in the biosphere, after cellulose. The chain is Probable exo-1,4-beta-xylosidase xlnD (xlnD) from Aspergillus fumigatus (strain ATCC MYA-4609 / CBS 101355 / FGSC A1100 / Af293) (Neosartorya fumigata).